The chain runs to 141 residues: Large ribosomal subunit protein uL11 (141 aa).

The protein belongs to the universal ribosomal protein uL11 family. In terms of assembly, part of the ribosomal stalk of the 50S ribosomal subunit. Interacts with L10 and the large rRNA to form the base of the stalk. L10 forms an elongated spine to which L12 dimers bind in a sequential fashion forming a multimeric L10(L12)X complex. Post-translationally, one or more lysine residues are methylated.

Functionally, forms part of the ribosomal stalk which helps the ribosome interact with GTP-bound translation factors. The protein is Large ribosomal subunit protein uL11 of Clostridium botulinum (strain Kyoto / Type A2).